Here is a 440-residue protein sequence, read N- to C-terminus: COP9 signalosome complex subunit 5 (440 aa).

An MPN domain is found at 71-218 (VLISKLSCEK…MGAFRTIESK (148 aa)). The Zn(2+) site is built by H164, H166, and D177. A JAMM motif motif is present at residues 164–177 (HSHPGYDCWLSNID). Over residues 319–341 (TQRGDSTETSSFGSMFSGDNTSD) the composition is skewed to polar residues. Disordered regions lie at residues 319-343 (TQRG…SDVD) and 376-400 (SRST…HDEG).

Belongs to the peptidase M67A family. CSN5 subfamily. In terms of assembly, component of a COP9 signalosome-like (CSN) complex, composed of at least RRI1/CSN5, CSN9, RRI2/CSN10, PCI8/CSN11, CSN12 and CSI1. Within this complex it probably interacts directly with CSN12. Also interacts with RPN5. A divalent metal cation serves as cofactor.

It localises to the cytoplasm. Its subcellular location is the nucleus. In terms of biological role, catalytic component of the COP9 signalosome (CSN) complex that acts as an regulator of the ubiquitin (Ubl) conjugation pathway by mediating the deneddylation of the cullin subunit of SCF-type E3 ubiquitin-protein ligase complexes. The CSN complex is involved in the regulation of the mating pheromone response. This chain is COP9 signalosome complex subunit 5 (RRI1), found in Saccharomyces cerevisiae (strain YJM789) (Baker's yeast).